Reading from the N-terminus, the 377-residue chain is N-acetyldiaminopimelate deacetylase (377 aa).

The active site involves aspartate 70. The active-site Proton acceptor is glutamate 129.

The protein belongs to the peptidase M20A family. N-acetyldiaminopimelate deacetylase subfamily.

It catalyses the reaction N-acetyl-(2S,6S)-2,6-diaminopimelate + H2O = (2S,6S)-2,6-diaminopimelate + acetate. Its pathway is amino-acid biosynthesis; L-lysine biosynthesis via DAP pathway; LL-2,6-diaminopimelate from (S)-tetrahydrodipicolinate (acetylase route): step 3/3. Catalyzes the conversion of N-acetyl-diaminopimelate to diaminopimelate and acetate. The protein is N-acetyldiaminopimelate deacetylase of Streptococcus thermophilus (strain ATCC BAA-491 / LMD-9).